A 177-amino-acid chain; its full sequence is Bifunctional protein PyrR (177 aa).

The short motif at 99 to 111 (VVLVDDVLYTGRT) is the PRPP-binding element.

The protein belongs to the purine/pyrimidine phosphoribosyltransferase family. PyrR subfamily.

The enzyme catalyses UMP + diphosphate = 5-phospho-alpha-D-ribose 1-diphosphate + uracil. In terms of biological role, regulates the transcription of the pyrimidine nucleotide (pyr) operon in response to exogenous pyrimidines. Its function is as follows. Also displays a weak uracil phosphoribosyltransferase activity which is not physiologically significant. This Akkermansia muciniphila (strain ATCC BAA-835 / DSM 22959 / JCM 33894 / BCRC 81048 / CCUG 64013 / CIP 107961 / Muc) protein is Bifunctional protein PyrR.